A 186-amino-acid chain; its full sequence is Dynactin subunit 3 (186 aa).

Ala2 carries the N-acetylalanine modification. Positions 135–157 form a coiled coil; sequence QQQDQCVEITEESKALLEEYNKT.

The protein belongs to the dynactin subunit 3 family. Subunit of dynactin, a multiprotein complex part of a tripartite complex with dynein and a adapter, such as BICDL1, BICD2 or HOOK3. The dynactin complex is built around ACTR1A/ACTB filament and consists of an actin-related filament composed of a shoulder domain, a pointed end and a barbed end. Its length is defined by its flexible shoulder domain. The soulder is composed of 2 DCTN1 subunits, 4 DCTN2 and 2 DCTN3. The 4 DCNT2 (via N-terminus) bind the ACTR1A filament and act as molecular rulers to determine the length. The pointed end is important for binding dynein-dynactin cargo adapters. Consists of 4 subunits: ACTR10, DCNT4, DCTN5 and DCTN6. The barbed end is composed of a CAPZA1:CAPZB heterodimers, which binds ACTR1A/ACTB filament and dynactin and stabilizes dynactin. In terms of tissue distribution, ubiquitously expressed. Highly expressed in muscle and pancreas and detected at lower levels in brain.

The protein localises to the cytoplasm. It is found in the cytoskeleton. It localises to the microtubule organizing center. Its subcellular location is the centrosome. The protein resides in the chromosome. The protein localises to the centromere. It is found in the kinetochore. It localises to the spindle. Its subcellular location is the cleavage furrow. The protein resides in the midbody. In terms of biological role, part of the dynactin complex that activates the molecular motor dynein for ultra-processive transport along microtubules. Together with dynein may be involved in spindle assembly and cytokinesis. The polypeptide is Dynactin subunit 3 (Homo sapiens (Human)).